The chain runs to 275 residues: uncharacterized protein (275 aa).

Aspartate 45 is a binding site for NADPH. Active-site proton donor residues include tyrosine 50 and histidine 111. NADPH-binding residues include serine 139, glutamine 162, leucine 191, lysine 196, serine 232, serine 233, and arginine 237.

The protein belongs to the aldo/keto reductase family.

It is found in the cytoplasm. Its subcellular location is the nucleus. This is an uncharacterized protein from Schizosaccharomyces pombe (strain 972 / ATCC 24843) (Fission yeast).